A 388-amino-acid polypeptide reads, in one-letter code: Succinate--CoA ligase [ADP-forming] subunit beta (388 aa).

An ATP-grasp domain is found at 9-244; sequence KEILRKFGVA…PDEEDPKETQ (236 aa). ATP is bound by residues Lys-46, 53-55, Glu-99, Cys-102, and Glu-107; that span reads GRG. Positions 199 and 213 each coordinate Mg(2+). Residues Asn-264 and 321–323 contribute to the substrate site; that span reads GIM.

Belongs to the succinate/malate CoA ligase beta subunit family. As to quaternary structure, heterotetramer of two alpha and two beta subunits. The cofactor is Mg(2+).

It catalyses the reaction succinate + ATP + CoA = succinyl-CoA + ADP + phosphate. The catalysed reaction is GTP + succinate + CoA = succinyl-CoA + GDP + phosphate. Its pathway is carbohydrate metabolism; tricarboxylic acid cycle; succinate from succinyl-CoA (ligase route): step 1/1. Succinyl-CoA synthetase functions in the citric acid cycle (TCA), coupling the hydrolysis of succinyl-CoA to the synthesis of either ATP or GTP and thus represents the only step of substrate-level phosphorylation in the TCA. The beta subunit provides nucleotide specificity of the enzyme and binds the substrate succinate, while the binding sites for coenzyme A and phosphate are found in the alpha subunit. This chain is Succinate--CoA ligase [ADP-forming] subunit beta, found in Anaeromyxobacter dehalogenans (strain 2CP-C).